The chain runs to 508 residues: Amphoterin-induced protein 3 (508 aa).

A signal peptide spans 1-19; the sequence is MAWLVLLGLLLCMLGAGSG. Topologically, residues 20 to 383 are extracellular; that stretch reads TSDLEGVLPP…PRPEPEAFNT (364 aa). Residues 25–61 form the LRRNT domain; that stretch reads GVLPPDPHNCPNKCVCAADVLSCAGRGLQDLPAALPA. Cystine bridges form between Cys-34–Cys-40 and Cys-38–Cys-47. LRR repeat units follow at residues 62 to 83, 86 to 107, 110 to 131, 134 to 155, 158 to 178, and 184 to 207; these read TAAE…WLAP, RLRA…VFTN, GLRI…DLDG, ELEK…AFQG, MLSH…NHLH, and RLRT…AALP. Asn-107 is a glycosylation site (N-linked (GlcNAc...) asparagine). The 57-residue stretch at 219–275 folds into the LRRCT domain; sequence NPLPCDCSLYHLLRRWHQRGLSALHDFEREYTCLAFKVAESRVRFFEHSRVFKNCSV. 3 cysteine pairs are disulfide-bonded: Cys-223-Cys-251, Cys-225-Cys-273, and Cys-300-Cys-352. N-linked (GlcNAc...) asparagine glycosylation is found at Asn-272, Asn-301, Asn-362, and Asn-368. The Ig-like C2-type domain occupies 279–370; sequence PGLELPEEEL…HNQTLEYNVS (92 aa). The helical transmembrane segment at 384–404 threads the bilayer; the sequence is GFTTLLGCIVGLVLVLLYLFA. The Cytoplasmic portion of the chain corresponds to 405 to 508; sequence PPCRGCCRCC…STGSEGLMMS (104 aa).

It belongs to the immunoglobulin superfamily. AMIGO family. As to quaternary structure, binds AMIGO1 or AMIGO2.

It localises to the membrane. Its function is as follows. May mediate heterophilic cell-cell interaction. May contribute to signal transduction through its intracellular domain. This Rattus norvegicus (Rat) protein is Amphoterin-induced protein 3.